The primary structure comprises 436 residues: 3-ketoacyl-CoA thiolase (436 aa).

Residue C99 is the Acyl-thioester intermediate of the active site. Active-site proton acceptor residues include H392 and C422.

Belongs to the thiolase-like superfamily. Thiolase family. Heterotetramer of two alpha chains (FadJ) and two beta chains (FadI).

It is found in the cytoplasm. The catalysed reaction is an acyl-CoA + acetyl-CoA = a 3-oxoacyl-CoA + CoA. Its pathway is lipid metabolism; fatty acid beta-oxidation. In terms of biological role, catalyzes the final step of fatty acid oxidation in which acetyl-CoA is released and the CoA ester of a fatty acid two carbons shorter is formed. This is 3-ketoacyl-CoA thiolase from Salmonella dublin (strain CT_02021853).